Here is a 98-residue protein sequence, read N- to C-terminus: uncharacterized protein (98 aa).

Residues 1 to 85 form the STAS domain; it reads MLETVPVRCV…GTLKQALENM (85 aa).

Post-translationally, phosphorylated on threonine residue(s). Phosphorylated by PrkC and dephosphorylated by PrpC.

It localises to the cytoplasm. This is an uncharacterized protein from Bacillus subtilis (strain 168).